We begin with the raw amino-acid sequence, 600 residues long: Aspartate--tRNA(Asp/Asn) ligase (600 aa).

Residue E174 coordinates L-aspartate. The segment at 198-201 (QLFK) is aspartate. R220 contacts L-aspartate. ATP is bound by residues 220–222 (RDE) and Q229. H457 contributes to the L-aspartate binding site. E491 contacts ATP. R498 is an L-aspartate binding site. Residue 543-546 (GLDR) coordinates ATP.

It belongs to the class-II aminoacyl-tRNA synthetase family. Type 1 subfamily. As to quaternary structure, homodimer.

The protein resides in the cytoplasm. It catalyses the reaction tRNA(Asx) + L-aspartate + ATP = L-aspartyl-tRNA(Asx) + AMP + diphosphate. In terms of biological role, aspartyl-tRNA synthetase with relaxed tRNA specificity since it is able to aspartylate not only its cognate tRNA(Asp) but also tRNA(Asn). Reaction proceeds in two steps: L-aspartate is first activated by ATP to form Asp-AMP and then transferred to the acceptor end of tRNA(Asp/Asn). The polypeptide is Aspartate--tRNA(Asp/Asn) ligase (Burkholderia ambifaria (strain ATCC BAA-244 / DSM 16087 / CCUG 44356 / LMG 19182 / AMMD) (Burkholderia cepacia (strain AMMD))).